The sequence spans 219 residues: tRNA (guanine-N(7)-)-methyltransferase (219 aa).

4 residues coordinate S-adenosyl-L-methionine: Glu43, Asp68, Glu101, and Asn124. The substrate site is built by Lys128 and Asp160.

Belongs to the class I-like SAM-binding methyltransferase superfamily. TrmB family.

It catalyses the reaction guanosine(46) in tRNA + S-adenosyl-L-methionine = N(7)-methylguanosine(46) in tRNA + S-adenosyl-L-homocysteine. Its pathway is tRNA modification; N(7)-methylguanine-tRNA biosynthesis. Functionally, catalyzes the formation of N(7)-methylguanine at position 46 (m7G46) in tRNA. The sequence is that of tRNA (guanine-N(7)-)-methyltransferase from Clostridium botulinum (strain Alaska E43 / Type E3).